Consider the following 728-residue polypeptide: Catalase-peroxidase 1 (728 aa).

An N-terminal signal peptide occupies residues 1-22 (MDKTQSSQGKCPVMHGANSAVA). The segment at residues 97–225 (WHSAGTYRVA…LAAVMMGLIY (129 aa)) is a cross-link (tryptophyl-tyrosyl-methioninium (Trp-Tyr) (with M-251)). H98 (proton acceptor) is an active-site residue. A cross-link (tryptophyl-tyrosyl-methioninium (Tyr-Met) (with W-97)) is located at residues 225–251 (YVNPEGVDGKPDPLRTAQDVRVTFARM). H266 lines the heme b pocket.

Belongs to the peroxidase family. Peroxidase/catalase subfamily. Homodimer or homotetramer. Requires heme b as cofactor. In terms of processing, formation of the three residue Trp-Tyr-Met cross-link is important for the catalase, but not the peroxidase activity of the enzyme.

The enzyme catalyses H2O2 + AH2 = A + 2 H2O. The catalysed reaction is 2 H2O2 = O2 + 2 H2O. In terms of biological role, bifunctional enzyme with both catalase and broad-spectrum peroxidase activity. The polypeptide is Catalase-peroxidase 1 (Shewanella sp. (strain MR-7)).